The primary structure comprises 319 residues: MAGPGLEFENEIADLEEQIASLERNTDRSEEIDSAIRSLRLARVAKLKETYSSLDPWQTVQVARHKNRPYTRDYLNLAFDEFVELHGDKHFGDDRAMLSGFAKLDRFKVMVIGHQKGRTYKERAACHFGCAHPEGYRKAMVKMKMAEKYRLPVICFIDTPGAYPGIGAEERGQAQVIAESMFMMSDLKTPVICVVIGEGGSGGALGIGVGDRVAVLQHAYYSVISPEGCAGILWKSHEHAPKAAAALRFTSDHLLRLGVVDDVLEEPLGGAHRDHHQMATRMKTYLSRQLSELEEMPVDLMLEQRYEKFRKLGVFLEES.

The CoA carboxyltransferase C-terminal domain maps to 31–292 (EIDSAIRSLR…KTYLSRQLSE (262 aa)).

Belongs to the AccA family. Acetyl-CoA carboxylase is a heterohexamer composed of biotin carboxyl carrier protein (AccB), biotin carboxylase (AccC) and two subunits each of ACCase subunit alpha (AccA) and ACCase subunit beta (AccD).

It localises to the cytoplasm. The enzyme catalyses N(6)-carboxybiotinyl-L-lysyl-[protein] + acetyl-CoA = N(6)-biotinyl-L-lysyl-[protein] + malonyl-CoA. The protein operates within lipid metabolism; malonyl-CoA biosynthesis; malonyl-CoA from acetyl-CoA: step 1/1. Component of the acetyl coenzyme A carboxylase (ACC) complex. First, biotin carboxylase catalyzes the carboxylation of biotin on its carrier protein (BCCP) and then the CO(2) group is transferred by the carboxyltransferase to acetyl-CoA to form malonyl-CoA. The sequence is that of Acetyl-coenzyme A carboxylase carboxyl transferase subunit alpha from Rhodopirellula baltica (strain DSM 10527 / NCIMB 13988 / SH1).